The primary structure comprises 648 residues: Pumilio homolog 3 (648 aa).

The interval 1–124 is disordered; the sequence is MEVKGKKQFT…KKKKELKQSR (124 aa). A compositionally biased stretch (basic and acidic residues) spans 17–27; sequence AQEKNRFHKNS. Position 33 is an N6-acetyllysine (Lys33). Over residues 60–69 the composition is skewed to basic residues; sequence LGKKGVKQFK. The segment covering 94–124 has biased composition (basic and acidic residues); it reads FQPDGRSDESAAKKPKWDDFKKKKKELKQSR. Positions 106 to 118 match the Nuclear localization signal motif; it reads KKPKWDDFKKKKK. A PUM-HD domain is found at 143–510; the sequence is EILRRKDCDK…VVLDKSACVL (368 aa). 11 Pumilio repeats span residues 177-212, 213-248, 249-277, 289-325, 326-361, 362-397, 398-435, 436-504, 505-551, 552-596, and 597-636; these read HDST…LSKA, KYSR…MLRH, AEAS…ELYG, RTLD…VIKH, SLVH…LAHT, HDGA…VANG, QYSH…IVND, KYGR…VVLD, KSAC…IAEH, PAGH…WASV, and NRGA…KSTS. Residues 289–297 form an HA-8 region; that stretch reads RTLDKVLEV.

Interacts with PARP1 (via catalytic domain). As to expression, widely expressed.

The protein localises to the nucleus. The protein resides in the nucleolus. It is found in the nucleoplasm. Its subcellular location is the chromosome. In terms of biological role, inhibits the poly(ADP-ribosyl)ation activity of PARP1 and the degradation of PARP1 by CASP3 following genotoxic stress. Binds to double-stranded RNA or DNA without sequence specificity. Involved in development of the eye and of primordial germ cells. This is Pumilio homolog 3 from Homo sapiens (Human).